The sequence spans 35 residues: Photosystem II reaction center protein T (35 aa).

Residues 3 to 23 (ALVYTFLLVSTLGIIFFAIFF) traverse the membrane as a helical segment.

Belongs to the PsbT family. In terms of assembly, PSII is composed of 1 copy each of membrane proteins PsbA, PsbB, PsbC, PsbD, PsbE, PsbF, PsbH, PsbI, PsbJ, PsbK, PsbL, PsbM, PsbT, PsbY, PsbZ, Psb30/Ycf12, at least 3 peripheral proteins of the oxygen-evolving complex and a large number of cofactors. It forms dimeric complexes.

It localises to the plastid. Its subcellular location is the chloroplast thylakoid membrane. Found at the monomer-monomer interface of the photosystem II (PS II) dimer, plays a role in assembly and dimerization of PSII. PSII is a light-driven water plastoquinone oxidoreductase, using light energy to abstract electrons from H(2)O, generating a proton gradient subsequently used for ATP formation. The chain is Photosystem II reaction center protein T from Cabomba caroliniana (Carolina fanwort).